A 550-amino-acid polypeptide reads, in one-letter code: Glucose-6-phosphate isomerase (550 aa).

The active-site Proton donor is Glu356. Active-site residues include His387 and Lys515.

Belongs to the GPI family.

The protein resides in the cytoplasm. It catalyses the reaction alpha-D-glucose 6-phosphate = beta-D-fructose 6-phosphate. It participates in carbohydrate biosynthesis; gluconeogenesis. The protein operates within carbohydrate degradation; glycolysis; D-glyceraldehyde 3-phosphate and glycerone phosphate from D-glucose: step 2/4. Functionally, catalyzes the reversible isomerization of glucose-6-phosphate to fructose-6-phosphate. This is Glucose-6-phosphate isomerase from Vibrio vulnificus (strain YJ016).